Reading from the N-terminus, the 743-residue chain is Phosphoribosylformylglycinamidine synthase subunit PurL (743 aa).

His-50 is an active-site residue. Residues Tyr-53 and Lys-92 each contribute to the ATP site. A Mg(2+)-binding site is contributed by Glu-94. Residues 95-98 and Arg-117 contribute to the substrate site; that span reads SHNH. His-96 serves as the catalytic Proton acceptor. Asp-118 provides a ligand contact to Mg(2+). Residue Gln-241 coordinates substrate. Asp-269 contributes to the Mg(2+) binding site. 313-315 provides a ligand contact to substrate; the sequence is ESQ. Positions 494 and 531 each coordinate ATP. Asn-532 serves as a coordination point for Mg(2+). Position 534 (Ser-534) interacts with substrate.

It belongs to the FGAMS family. Monomer. Part of the FGAM synthase complex composed of 1 PurL, 1 PurQ and 2 PurS subunits.

Its subcellular location is the cytoplasm. The catalysed reaction is N(2)-formyl-N(1)-(5-phospho-beta-D-ribosyl)glycinamide + L-glutamine + ATP + H2O = 2-formamido-N(1)-(5-O-phospho-beta-D-ribosyl)acetamidine + L-glutamate + ADP + phosphate + H(+). The protein operates within purine metabolism; IMP biosynthesis via de novo pathway; 5-amino-1-(5-phospho-D-ribosyl)imidazole from N(2)-formyl-N(1)-(5-phospho-D-ribosyl)glycinamide: step 1/2. Part of the phosphoribosylformylglycinamidine synthase complex involved in the purines biosynthetic pathway. Catalyzes the ATP-dependent conversion of formylglycinamide ribonucleotide (FGAR) and glutamine to yield formylglycinamidine ribonucleotide (FGAM) and glutamate. The FGAM synthase complex is composed of three subunits. PurQ produces an ammonia molecule by converting glutamine to glutamate. PurL transfers the ammonia molecule to FGAR to form FGAM in an ATP-dependent manner. PurS interacts with PurQ and PurL and is thought to assist in the transfer of the ammonia molecule from PurQ to PurL. This is Phosphoribosylformylglycinamidine synthase subunit PurL from Sinorhizobium medicae (strain WSM419) (Ensifer medicae).